The primary structure comprises 627 residues: Transketolase-like protein 2 (627 aa).

Residue His39 participates in substrate binding. Residues Ser42, His79, and 125-127 (GSL) each bind thiamine diphosphate. Asp157 contacts Mg(2+). Gly158 and Asn187 together coordinate thiamine diphosphate. Mg(2+) is bound by residues Asn187 and Leu189. Residues Lys249 and His263 each coordinate thiamine diphosphate. Residues His263, Arg323, and Ser350 each contribute to the substrate site. Residues Glu371 and Phe397 each contribute to the thiamine diphosphate site. Glu371 serves as the catalytic Proton donor. 2 residues coordinate substrate: His421 and Asp429. Position 433 (Gln433) interacts with thiamine diphosphate. Arg479 contacts substrate.

Belongs to the transketolase family. In terms of assembly, homodimer. Mg(2+) is required as a cofactor. It depends on Ca(2+) as a cofactor. Mn(2+) serves as cofactor. Requires Co(2+) as cofactor. The cofactor is thiamine diphosphate.

It carries out the reaction D-sedoheptulose 7-phosphate + D-glyceraldehyde 3-phosphate = aldehydo-D-ribose 5-phosphate + D-xylulose 5-phosphate. In terms of biological role, plays an essential role in total transketolase activity and cell proliferation in cancer cells; after transfection with anti-TKTL1 siRNA, total transketolase activity dramatically decreases and proliferation was significantly inhibited in cancer cells. Plays a pivotal role in carcinogenesis. The chain is Transketolase-like protein 2 (Tktl2) from Mus musculus (Mouse).